The following is a 420-amino-acid chain: Chaperone protein dnaJ 3 (420 aa).

In terms of domain architecture, J spans 14–75 (KFYEILGVPK…EKREIYDQYG (62 aa)). Residues 135–219 (GTMKKLSLSR…CKGDKVIPEK (85 aa)) form a CR-type zinc finger. Residues Cys148, Cys151, Cys164, Cys167, Cys191, Cys194, Cys207, and Cys210 each contribute to the Zn(2+) site. CXXCXGXG motif repeat units lie at residues 148-155 (CSKCNGKG), 164-171 (CGGCQGSG), 191-198 (CNECKGTG), and 207-214 (CPQCKGDK). The segment at 376–420 (ETTLHDVNIEDEMRRKAQAQREAYDDDDEDDDHPGGAQRVQCAQQ) is disordered. The segment covering 377-390 (TTLHDVNIEDEMRR) has biased composition (basic and acidic residues). A Cysteine methyl ester modification is found at Cys417. A lipid anchor (S-farnesyl cysteine) is attached at Cys417. Positions 418–420 (AQQ) are cleaved as a propeptide — removed in mature form.

Belongs to the DnaJ family. A/I subfamily. Homodimer. Zn(2+) is required as a cofactor. Farnesylated. As to expression, roots, shoots, flowers, siliques and cotyledons.

It localises to the membrane. Functionally, plays a continuous role in plant development probably in the structural organization of compartments. The sequence is that of Chaperone protein dnaJ 3 (ATJ3) from Arabidopsis thaliana (Mouse-ear cress).